The primary structure comprises 280 residues: Pantothenate synthetase (280 aa).

Residue 32–39 (MGALHAGH) participates in ATP binding. His39 (proton donor) is an active-site residue. A (R)-pantoate-binding site is contributed by Gln63. A beta-alanine-binding site is contributed by Gln63. Residue 149–152 (GEKD) participates in ATP binding. Position 155 (Gln155) interacts with (R)-pantoate. Residues Val178 and 186 to 189 (MSSR) contribute to the ATP site.

This sequence belongs to the pantothenate synthetase family. Homodimer.

It is found in the cytoplasm. The enzyme catalyses (R)-pantoate + beta-alanine + ATP = (R)-pantothenate + AMP + diphosphate + H(+). It functions in the pathway cofactor biosynthesis; (R)-pantothenate biosynthesis; (R)-pantothenate from (R)-pantoate and beta-alanine: step 1/1. Catalyzes the condensation of pantoate with beta-alanine in an ATP-dependent reaction via a pantoyl-adenylate intermediate. The polypeptide is Pantothenate synthetase (Ruegeria sp. (strain TM1040) (Silicibacter sp.)).